A 223-amino-acid chain; its full sequence is MKQSVLDLQATIQETLGDAIVVSDIKLDELTVELAPEQSLSALTKLKEKLGFDQLIDVCGVDYLAFGDVTWETRKATNSGFSRGVFDFAEEDGEADTNIPRRFAVVYHLLSVENNRRVRVKVYPEDTQMPMVDSVVSVWNCADWFEREAFDLFGILFNGHPDLRRILTDYGFVGHPLRKDFPLTGHVEMRYDAEKGRVVYEPVTIENRVNVPRVIRNDVEPKG.

Belongs to the complex I 30 kDa subunit family. As to quaternary structure, NDH-1 is composed of 14 different subunits. Subunits NuoB, C, D, E, F, and G constitute the peripheral sector of the complex.

It is found in the cell inner membrane. The catalysed reaction is a quinone + NADH + 5 H(+)(in) = a quinol + NAD(+) + 4 H(+)(out). In terms of biological role, NDH-1 shuttles electrons from NADH, via FMN and iron-sulfur (Fe-S) centers, to quinones in the respiratory chain. The immediate electron acceptor for the enzyme in this species is believed to be ubiquinone. Couples the redox reaction to proton translocation (for every two electrons transferred, four hydrogen ions are translocated across the cytoplasmic membrane), and thus conserves the redox energy in a proton gradient. The chain is NADH-quinone oxidoreductase subunit C from Hydrogenovibrio crunogenus (strain DSM 25203 / XCL-2) (Thiomicrospira crunogena).